Here is a 1290-residue protein sequence, read N- to C-terminus: Alpha-factor-transporting ATPase (1290 aa).

Over 1 to 25 (MNFLSFKTTKHYHIFRYVNIRNDYR) the chain is Cytoplasmic. Residues 26-46 (LLMIMIIGTVATGLVPAITSI) traverse the membrane as a helical segment. In terms of domain architecture, ABC transmembrane type-1 1 spans 27–319 (LMIMIIGTVA…TLHQIVVLQK (293 aa)). Over 47–75 (LTGRVFDLLSVFVANGSHQGLYSQLVQRS) the chain is Extracellular. A glycan (N-linked (GlcNAc...) asparagine) is linked at Asn-61. The helical transmembrane segment at 76–96 (MAVMALGAASVPVMWLSLTSW) threads the bilayer. The Cytoplasmic segment spans residues 97 to 150 (MHIGERQGFRIRSQILEAYLEEKPMEWYDNNEKLLGDFTQINRCVEELRSSSAE). Residues 151 to 171 (ASAITFQNLVAICALLGTSFY) form a helical membrane-spanning segment. Residues 172–173 (YS) lie on the Extracellular side of the membrane. The chain crosses the membrane as a helical span at residues 174–194 (WSLTLIILCSSPIITFFAVVF). The Cytoplasmic segment spans residues 195–262 (SRMIHVYSEK…SCFFVAANAG (68 aa)). The chain crosses the membrane as a helical span at residues 263-283 (ILRFLTLTMFVQGFWFGSAMI). Over 284–296 (KKGKLNINDVITC) the chain is Extracellular. The chain crosses the membrane as a helical span at residues 297–317 (FHSCIMLGSTLNNTLHQIVVL). Over 318–715 (QKGGVAMEKI…RMIKSIRYKK (398 aa)) the chain is Cytoplasmic. The ABC transporter 1 domain maps to 357-603 (LTFANVSFSY…PTTTFSTWYH (247 aa)). Residue 392–399 (GKSGSGKS) coordinates ATP. Residues 716-736 (ILILGLLCSLIAGATNPVFSY) traverse the membrane as a helical segment. Positions 717–1007 (LILGLLCSLI…LVSQIPDISR (291 aa)) constitute an ABC transmembrane type-1 2 domain. The Extracellular segment spans residues 737–763 (TFSFLLEGIVPSTDGKTGSSHYLAKWS). Residues 764 to 784 (LLVLGVAAADGIFNFAKGFLL) traverse the membrane as a helical segment. Topologically, residues 785–838 (DCCSEYWVMDLRNEVMEKLTRKNMDWFSGENNKASEISALVLNDLRDLRSLVSE) are cytoplasmic. Residues 839–859 (FLSAMTSFVTVSTIGLIWALV) form a helical membrane-spanning segment. Over 860-865 (SGWKLS) the chain is Extracellular. Residues 866–886 (LVCISMFPLIIIFSAIYGGIL) traverse the membrane as a helical segment. The Cytoplasmic segment spans residues 887–945 (QKCETDYKTSVAQLENCLYQIVTNIKTIKCLQAEFHFQLTYHDLKIKMQQIASKRAIAT). The helical transmembrane segment at 946–966 (GFGISMTNMIVMCIQAIIYYY) threads the bilayer. The Extracellular portion of the chain corresponds to 967-981 (GLKLVMIHEYTSKEM). Residues 982–1002 (FTTFTLLLFTIMSCTSLVSQI) traverse the membrane as a helical segment. Over 1003–1290 (PDISRGQRAA…LFQIVSNQSS (288 aa)) the chain is Cytoplasmic. Lys-1022 is covalently cross-linked (Glycyl lysine isopeptide (Lys-Gly) (interchain with G-Cter in ubiquitin)). Residues 1052–1287 (VSIQNLTFAY…RGELFQIVSN (236 aa)) enclose the ABC transporter 2 domain. 1087–1094 (GESGTGKS) is an ATP binding site.

This sequence belongs to the ABC transporter superfamily. Alpha-factor sex pheromone exporter (TC 3.A.1.206) family. In terms of processing, degraded via the ubiquitin system.

It is found in the membrane. The catalysed reaction is an [alpha-factor](in) + ATP + H2O = an [alpha-factor](out) + ADP + phosphate + H(+). Its function is as follows. STE6 is required in yeast MATA cells for production of A-factor pheromone. STE6 is involved in the transport of the farnesyl-derivation of the A-factor pheromone. The sequence is that of Alpha-factor-transporting ATPase (STE6) from Saccharomyces cerevisiae (strain ATCC 204508 / S288c) (Baker's yeast).